Here is a 516-residue protein sequence, read N- to C-terminus: 2,3-bisphosphoglycerate-independent phosphoglycerate mutase (516 aa).

Residues D13 and S63 each contribute to the Mn(2+) site. S63 (phosphoserine intermediate) is an active-site residue. Residues H124, 154 to 155 (RD), R186, R192, 262 to 265 (RPDR), and K337 contribute to the substrate site. Mn(2+) is bound by residues D404, H408, D445, H446, and H464.

It belongs to the BPG-independent phosphoglycerate mutase family. Monomer. Mn(2+) is required as a cofactor.

It carries out the reaction (2R)-2-phosphoglycerate = (2R)-3-phosphoglycerate. It participates in carbohydrate degradation; glycolysis; pyruvate from D-glyceraldehyde 3-phosphate: step 3/5. Functionally, catalyzes the interconversion of 2-phosphoglycerate and 3-phosphoglycerate. In Cellvibrio japonicus (strain Ueda107) (Pseudomonas fluorescens subsp. cellulosa), this protein is 2,3-bisphosphoglycerate-independent phosphoglycerate mutase.